A 288-amino-acid polypeptide reads, in one-letter code: MERPQPDSMPQDLSEALKEATKEVHTQAENAEFMRNFQKGQVTREGFKLVMASLYHIYVALEEEIEHNKESPVFAPVYFPEELHRKAALEQDLAFWYGPRWQEVIPYTPAMQRYVKRLHEVGRTEPELLVAHAYTRYLGDLSGGQVLKKIAQKALGLPSSGEGLAFFTFPNIASATKFKQLYRSRMNSLEMTPAVRQRVIEEAKTAFLLNIQLFEELQELLTHDTKDQSPSRAPGLRQRASNKAQDSAPVETPRGKTPLNTHSQAPLLRWVLTLSFLVATVAVGLYAM.

At 1–265 (MERPQPDSMP…KTPLNTHSQA (265 aa)) the chain is on the cytoplasmic side. Residues lysine 18, histidine 25, tyrosine 134, and arginine 183 each coordinate heme b. The interval 223–260 (HDTKDQSPSRAPGLRQRASNKAQDSAPVETPRGKTPLN) is disordered. Position 229 is a phosphoserine (serine 229). The helical; Anchor for type IV membrane protein transmembrane segment at 266-288 (PLLRWVLTLSFLVATVAVGLYAM) threads the bilayer.

It belongs to the heme oxygenase family. As to quaternary structure, homodimer and higher order homooligomer. Oligomerization is crucial for its stability and function in the endoplasmic reticulum. Interacts with FLVCR2; this interaction is potentiated in the presence of heme. In terms of processing, a soluble form arises by proteolytic removal of the membrane anchor.

The protein localises to the endoplasmic reticulum membrane. The enzyme catalyses heme b + 3 reduced [NADPH--hemoprotein reductase] + 3 O2 = biliverdin IXalpha + CO + Fe(2+) + 3 oxidized [NADPH--hemoprotein reductase] + 3 H2O + H(+). Catalyzes the oxidative cleavage of heme at the alpha-methene bridge carbon, released as carbon monoxide (CO), to generate biliverdin IXalpha, while releasing the central heme iron chelate as ferrous iron. Affords protection against programmed cell death and this cytoprotective effect relies on its ability to catabolize free heme and prevent it from sensitizing cells to undergo apoptosis. Its function is as follows. Catalyzes the oxidative cleavage of heme at the alpha-methene bridge carbon, released as carbon monoxide (CO), to generate biliverdin IXalpha, while releasing the central heme iron chelate as ferrous iron. The polypeptide is Heme oxygenase 1 (HMOX1) (Pongo abelii (Sumatran orangutan)).